The primary structure comprises 494 residues: Ketol-acid reductoisomerase (NADP(+)) (494 aa).

Residues 14 to 208 enclose the KARI N-terminal Rossmann domain; that stretch reads LDQLGRCRFM…GGHRAGCLES (195 aa). NADP(+) contacts are provided by residues 45-48, arginine 68, arginine 76, serine 78, and 108-110; these read CGAQ and DKQ. Residue histidine 132 is part of the active site. Glycine 158 serves as a coordination point for NADP(+). KARI C-terminal knotted domains are found at residues 209–344 and 345–487; these read SFVA…NYPD and SSLE…MTDM. Aspartate 217, glutamate 221, glutamate 389, and glutamate 393 together coordinate Mg(2+). Serine 414 contributes to the substrate binding site.

This sequence belongs to the ketol-acid reductoisomerase family. The cofactor is Mg(2+).

It catalyses the reaction (2R)-2,3-dihydroxy-3-methylbutanoate + NADP(+) = (2S)-2-acetolactate + NADPH + H(+). It carries out the reaction (2R,3R)-2,3-dihydroxy-3-methylpentanoate + NADP(+) = (S)-2-ethyl-2-hydroxy-3-oxobutanoate + NADPH + H(+). It participates in amino-acid biosynthesis; L-isoleucine biosynthesis; L-isoleucine from 2-oxobutanoate: step 2/4. Its pathway is amino-acid biosynthesis; L-valine biosynthesis; L-valine from pyruvate: step 2/4. Involved in the biosynthesis of branched-chain amino acids (BCAA). Catalyzes an alkyl-migration followed by a ketol-acid reduction of (S)-2-acetolactate (S2AL) to yield (R)-2,3-dihydroxy-isovalerate. In the isomerase reaction, S2AL is rearranged via a Mg-dependent methyl migration to produce 3-hydroxy-3-methyl-2-ketobutyrate (HMKB). In the reductase reaction, this 2-ketoacid undergoes a metal-dependent reduction by NADPH to yield (R)-2,3-dihydroxy-isovalerate. This chain is Ketol-acid reductoisomerase (NADP(+)), found in Aliivibrio salmonicida (strain LFI1238) (Vibrio salmonicida (strain LFI1238)).